The following is a 239-amino-acid chain: uncharacterized protein (239 aa).

This is an uncharacterized protein from Homo sapiens (Human).